Here is a 21-residue protein sequence, read N- to C-terminus: Dahlein-5.4 (21 aa).

As to expression, expressed by the skin dorsal glands.

It is found in the secreted. Its function is as follows. Has no antimicrobial activity. Strongly inhibits the formation of NO by neuronal nitric oxide synthase at micromolar concentrations. In Ranoidea dahlii (Dahl's aquatic frog), this protein is Dahlein-5.4.